The chain runs to 631 residues: Phosphomethylpyrimidine synthase (631 aa).

Residues Asn239, Met268, Tyr297, His333, 353–355 (SRG), 394–397 (DGLR), and Glu433 each bind substrate. Residue His437 coordinates Zn(2+). Substrate is bound at residue Tyr460. His501 contacts Zn(2+). Residues Cys581, Cys584, and Cys589 each contribute to the [4Fe-4S] cluster site.

The protein belongs to the ThiC family. As to quaternary structure, homodimer. It depends on [4Fe-4S] cluster as a cofactor.

It carries out the reaction 5-amino-1-(5-phospho-beta-D-ribosyl)imidazole + S-adenosyl-L-methionine = 4-amino-2-methyl-5-(phosphooxymethyl)pyrimidine + CO + 5'-deoxyadenosine + formate + L-methionine + 3 H(+). The protein operates within cofactor biosynthesis; thiamine diphosphate biosynthesis. Its function is as follows. Catalyzes the synthesis of the hydroxymethylpyrimidine phosphate (HMP-P) moiety of thiamine from aminoimidazole ribotide (AIR) in a radical S-adenosyl-L-methionine (SAM)-dependent reaction. The sequence is that of Phosphomethylpyrimidine synthase from Ralstonia nicotianae (strain ATCC BAA-1114 / GMI1000) (Ralstonia solanacearum).